The primary structure comprises 355 residues: Probable butyrate kinase (355 aa).

It belongs to the acetokinase family.

Its subcellular location is the cytoplasm. The enzyme catalyses butanoate + ATP = butanoyl phosphate + ADP. The polypeptide is Probable butyrate kinase (Listeria innocua serovar 6a (strain ATCC BAA-680 / CLIP 11262)).